The primary structure comprises 188 residues: Inosine triphosphate pyrophosphatase (188 aa).

9 to 14 lines the ITP pocket; the sequence is TGNAKK. Glu39 is a binding site for Mg(2+). Residues Lys51, 67–68, Lys84, 143–146, Lys166, and 171–172 contribute to the ITP site; these read DT, FGWD, and HR.

It belongs to the HAM1 NTPase family. In terms of assembly, homodimer. Requires Mg(2+) as cofactor. Mn(2+) is required as a cofactor.

It is found in the cytoplasm. It carries out the reaction ITP + H2O = IMP + diphosphate + H(+). It catalyses the reaction dITP + H2O = dIMP + diphosphate + H(+). The enzyme catalyses XTP + H2O = XMP + diphosphate + H(+). Its function is as follows. Pyrophosphatase that hydrolyzes non-canonical purine nucleotides such as inosine triphosphate (ITP), deoxyinosine triphosphate (dITP) or xanthosine 5'-triphosphate (XTP) to their respective monophosphate derivatives. The enzyme does not distinguish between the deoxy- and ribose forms. Probably excludes non-canonical purines from RNA and DNA precursor pools, thus preventing their incorporation into RNA and DNA and avoiding chromosomal lesions. This chain is Inosine triphosphate pyrophosphatase, found in Aedes aegypti (Yellowfever mosquito).